Reading from the N-terminus, the 92-residue chain is Small ribosomal subunit protein bS18 (92 aa).

Residues 1–22 (MADERAPQRSTSGPRKKRPFQR) are disordered.

It belongs to the bacterial ribosomal protein bS18 family. In terms of assembly, part of the 30S ribosomal subunit. Forms a tight heterodimer with protein bS6.

Binds as a heterodimer with protein bS6 to the central domain of the 16S rRNA, where it helps stabilize the platform of the 30S subunit. In Citrifermentans bemidjiense (strain ATCC BAA-1014 / DSM 16622 / JCM 12645 / Bem) (Geobacter bemidjiensis), this protein is Small ribosomal subunit protein bS18.